The chain runs to 552 residues: BAR/IMD domain-containing adapter protein 2 (552 aa).

Positions 1–250 constitute an IMD domain; it reads MSLSRSEEMH…VQLMQQVASN (250 aa). Residues 132-153 adopt a coiled-coil conformation; sequence DALDKCQAELKKLRKKSQGSKN. Ser261 carries the post-translational modification Phosphoserine. Positions 295-369 are disordered; the sequence is STPIMNGVTG…TLPRSSSMAA (75 aa). A Phosphothreonine modification is found at Thr296. The span at 320–334 shows a compositional bias: low complexity; sequence QPKSLSPPQSQSKLS. Phosphoserine is present on residues Ser323, Ser325, and Ser336. Residue Thr340 is modified to Phosphothreonine. Position 346 is a phosphoserine (Ser346). Positions 348 to 367 are enriched in polar residues; sequence TPKNSYATTENKTLPRSSSM. Thr360 bears the Phosphothreonine mark. Phosphoserine occurs at positions 366, 384, 395, and 454. One can recognise an SH3 domain in the interval 374–437; that stretch reads NGRMRVKAIF…PFSYTRVLDS (64 aa). Polar residues predominate over residues 447-457; it reads LQQGKSSSTGN. Disordered stretches follow at residues 447-466 and 525-552; these read LQQG…DLAI and TNDR…LAGR.

As to quaternary structure, homodimer. Interacts with CDC42 and RAC1 that have been activated by GTP binding. Interacts with ATN1, ADGRB1, EPS8, SHANK1, SHANK2, SHANK3, WASF1 and WASF2. Interacts with ENAH after recruitment of CDC42. Interacts with TIAM1 and DIAPH1. Interacts (via SH3 domain) with E.coli effector protein EspF(U) (via PXXP motifs). Interacts with E.coli intimin receptor Tir. In terms of processing, phosphorylated on tyrosine residues by INSR in response to insulin treatment. In terms of tissue distribution, isoform 1 and isoform 4 are expressed almost exclusively in brain. Isoform 4 is barely detectable in placenta, prostate and testis. A short isoform is ubiquitous, with the highest expression in liver, prostate, testis and placenta.

It localises to the cytoplasm. It is found in the membrane. The protein localises to the cell projection. Its subcellular location is the filopodium. The protein resides in the ruffle. It localises to the cytoskeleton. In terms of biological role, adapter protein that links membrane-bound small G-proteins to cytoplasmic effector proteins. Necessary for CDC42-mediated reorganization of the actin cytoskeleton and for RAC1-mediated membrane ruffling. Involved in the regulation of the actin cytoskeleton by WASF family members and the Arp2/3 complex. Plays a role in neurite growth. Acts syngeristically with ENAH to promote filipodia formation. Plays a role in the reorganization of the actin cytoskeleton in response to bacterial infection. Participates in actin bundling when associated with EPS8, promoting filopodial protrusions. This chain is BAR/IMD domain-containing adapter protein 2 (BAIAP2), found in Homo sapiens (Human).